Consider the following 596-residue polypeptide: Aspartate--tRNA(Asp/Asn) ligase (596 aa).

Residue E175 coordinates L-aspartate. The interval 199 to 202 (QQYK) is aspartate. 2 residues coordinate L-aspartate: R221 and H454. 221-223 (RDE) serves as a coordination point for ATP. E488 provides a ligand contact to ATP. L-aspartate is bound at residue R495. 540-543 (GIDR) contacts ATP.

This sequence belongs to the class-II aminoacyl-tRNA synthetase family. Type 1 subfamily. In terms of assembly, homodimer.

It localises to the cytoplasm. It catalyses the reaction tRNA(Asx) + L-aspartate + ATP = L-aspartyl-tRNA(Asx) + AMP + diphosphate. Aspartyl-tRNA synthetase with relaxed tRNA specificity since it is able to aspartylate not only its cognate tRNA(Asp) but also tRNA(Asn). Reaction proceeds in two steps: L-aspartate is first activated by ATP to form Asp-AMP and then transferred to the acceptor end of tRNA(Asp/Asn). The polypeptide is Aspartate--tRNA(Asp/Asn) ligase (Rhizobium leguminosarum bv. trifolii (strain WSM2304)).